The primary structure comprises 238 residues: Protein E6 (238 aa).

Residues Lys40–Thr51 show a composition bias toward basic and acidic residues. 2 disordered regions span residues Lys40–Glu64 and Glu210–Pro238. Residues Glu227–Pro238 are compositionally biased toward acidic residues.

In terms of tissue distribution, it is predominantly expressed in fiber cells.

It localises to the secreted. Its subcellular location is the cell wall. This chain is Protein E6 (E6), found in Gossypium hirsutum (Upland cotton).